A 428-amino-acid chain; its full sequence is Putative UDP-glucose 6-dehydrogenase YtcA (428 aa).

Positions Met1–Gly23 are cleaved as a signal peptide. NAD(+) contacts are provided by residues Lys2–Leu19, Val11, Asp30, Lys35, Thr118, and Glu152. Residues Glu148–Glu152, Lys203, Asn207, Phe248–Gly252, and Gly256 each bind substrate. Cys259 (nucleophile) is an active-site residue. Lys262 serves as a coordination point for NAD(+). Lys319 contacts substrate. Arg326 provides a ligand contact to NAD(+).

Belongs to the UDP-glucose/GDP-mannose dehydrogenase family.

The catalysed reaction is UDP-alpha-D-glucose + 2 NAD(+) + H2O = UDP-alpha-D-glucuronate + 2 NADH + 3 H(+). Its pathway is nucleotide-sugar biosynthesis; UDP-alpha-D-glucuronate biosynthesis; UDP-alpha-D-glucuronate from UDP-alpha-D-glucose: step 1/1. Functionally, catalyzes the conversion of UDP-glucose into UDP-glucuronate, one of the precursors of teichuronic acid. The chain is Putative UDP-glucose 6-dehydrogenase YtcA (ytcA) from Bacillus subtilis (strain 168).